A 29-amino-acid polypeptide reads, in one-letter code: Cuticle protein 36 (29 aa).

Functionally, component of the cuticle of migratory locust which contains more than 100 different structural proteins. This is Cuticle protein 36 from Locusta migratoria (Migratory locust).